The following is an 833-amino-acid chain: MLNKEEIIVPKNLEEEMKESYLRYSMSVIISRALPDVRDGLKPSQRRILYAMKQLNLTPGAKHRKCAKICGDTSGDYHPHGEAVIYPTLVRMAQDWAMRYPLVDGQGNFGSIDGDPAAAMRYTEARLTHSSIFLLEDLDKDTVDMVPNYDETKYEPVVFPSKFPNLLCNGSSGIAVGMATNIPPHNLGELIEATLLVLANPQTSIEEILEVMPGPDFPTGGIICGTEGIRSTYYTGRGKLRLRARIHVEENSDKQRENIILTEMPYNVNKSRLVEQIAELINEKTLTGISDVRDESDKDGIRVVLELKKGESSEVIINRLYKFTDVQVTFGANMLALDKNLPRTMSIHRMISAWIRHRMDVIRRRTRYELNKAETRAHILEGFLKALSCMDEVVKTIRESSNKEHAKQQLVELFGFSEAQSLAILELRLYQLTGLEIDKVQKEYNELLEKIAYYRRVLAEEELVKDIIREELQELHKVHKTPRRTTIEMDAGDVRDIEDIIADESVIITISGDDYVKRMPVKVFREQKRGGQGVTGFDMKKGSDFLKAVYSASTKDYLLIFTNMGQCYWLKVWQLPEGERRAKGKPIINFLEGIRPGEQVAAVLNVKRFEQGEYLLLATKKGVVKKVSLDAFGSPRKKGIRALEIDDGDELIAARHIVNDEEKVMLFTRLGMAVRFPHDKVRPMGRAARGVRGVSLKNEEDFVVSCQVVTDDQSVLVVCDNGFGKRSLVCDFRETNRGSVGVRSILINQRNGDVLGAISVTDFDSILLMSAQGQAIRINMQDVRVMGRATQGVRLVNLREGDTLVAMEKLSVNTESGETEESVSIQVGHAVEE.

Residues 34–500 enclose the Topo IIA-type catalytic domain; the sequence is LPDVRDGLKP…AGDVRDIEDI (467 aa). Catalysis depends on Y122, which acts as the O-(5'-phospho-DNA)-tyrosine intermediate. Positions 527–533 match the GyrA-box motif; that stretch reads QKRGGQG.

It belongs to the type II topoisomerase GyrA/ParC subunit family. Heterotetramer, composed of two GyrA and two GyrB chains. In the heterotetramer, GyrA contains the active site tyrosine that forms a transient covalent intermediate with DNA, while GyrB binds cofactors and catalyzes ATP hydrolysis.

It is found in the cytoplasm. It carries out the reaction ATP-dependent breakage, passage and rejoining of double-stranded DNA.. In terms of biological role, a type II topoisomerase that negatively supercoils closed circular double-stranded (ds) DNA in an ATP-dependent manner to modulate DNA topology and maintain chromosomes in an underwound state. Negative supercoiling favors strand separation, and DNA replication, transcription, recombination and repair, all of which involve strand separation. Also able to catalyze the interconversion of other topological isomers of dsDNA rings, including catenanes and knotted rings. Type II topoisomerases break and join 2 DNA strands simultaneously in an ATP-dependent manner. The polypeptide is DNA gyrase subunit A (Chlamydia muridarum (strain MoPn / Nigg)).